We begin with the raw amino-acid sequence, 336 residues long: D-alanine--D-alanine ligase (336 aa).

An ATP-grasp domain is found at 124 to 330 (KMWFSALGIP…FTEYLSLVIK (207 aa)). 154 to 209 (ALENWGSIFVKAASQGSSVGCYKVDDSSKVAGVLKDAFGYAPYVIVEKTIKARELE) provides a ligand contact to ATP. The Mg(2+) site is built by D284, E297, and N299.

It belongs to the D-alanine--D-alanine ligase family. Requires Mg(2+) as cofactor. Mn(2+) is required as a cofactor.

It localises to the cytoplasm. It catalyses the reaction 2 D-alanine + ATP = D-alanyl-D-alanine + ADP + phosphate + H(+). It functions in the pathway cell wall biogenesis; peptidoglycan biosynthesis. In terms of biological role, cell wall formation. This chain is D-alanine--D-alanine ligase, found in Shewanella sp. (strain MR-7).